The sequence spans 120 residues: Large ribosomal subunit protein uL24 (120 aa).

The interval methionine 1 to arginine 33 is disordered. Residues asparagine 10–lysine 22 show a composition bias toward basic and acidic residues.

It belongs to the universal ribosomal protein uL24 family. As to quaternary structure, part of the 50S ribosomal subunit.

Its function is as follows. One of two assembly initiator proteins, it binds directly to the 5'-end of the 23S rRNA, where it nucleates assembly of the 50S subunit. In terms of biological role, located at the polypeptide exit tunnel on the outside of the subunit. This Natronomonas pharaonis (strain ATCC 35678 / DSM 2160 / CIP 103997 / JCM 8858 / NBRC 14720 / NCIMB 2260 / Gabara) (Halobacterium pharaonis) protein is Large ribosomal subunit protein uL24.